We begin with the raw amino-acid sequence, 218 residues long: N-(5'-phosphoribosyl)anthranilate isomerase (218 aa).

This sequence belongs to the TrpF family.

It catalyses the reaction N-(5-phospho-beta-D-ribosyl)anthranilate = 1-(2-carboxyphenylamino)-1-deoxy-D-ribulose 5-phosphate. Its pathway is amino-acid biosynthesis; L-tryptophan biosynthesis; L-tryptophan from chorismate: step 3/5. The chain is N-(5'-phosphoribosyl)anthranilate isomerase from Bordetella parapertussis (strain 12822 / ATCC BAA-587 / NCTC 13253).